A 343-amino-acid polypeptide reads, in one-letter code: SET and MYND domain-containing protein DDB_G0292454 (343 aa).

One can recognise an SET domain in the interval 77 to 307 (EPFISYPSII…PGDEITISYT (231 aa)). Residues C93, C96, C111, C114, C120, C124, H133, and C137 each contribute to the Zn(2+) site. The MYND-type zinc-finger motif lies at 93-137 (CNHCLKEIKKEEEEIKQECEECKVYKYCSIECKEKSSIEYHSVLC).

Belongs to the class V-like SAM-binding methyltransferase superfamily.

Its function is as follows. Probable methyltransferase. This Dictyostelium discoideum (Social amoeba) protein is SET and MYND domain-containing protein DDB_G0292454.